The sequence spans 379 residues: Demethylspheroidene O-methyltransferase (379 aa).

Positions 235 and 279 each coordinate S-adenosyl-L-methionine.

It belongs to the class I-like SAM-binding methyltransferase superfamily. Cation-independent O-methyltransferase family.

It carries out the reaction demethylspheroidene + S-adenosyl-L-methionine = spheroidene + S-adenosyl-L-homocysteine + H(+). It functions in the pathway carotenoid biosynthesis; spheroidene biosynthesis. Its function is as follows. Methyltransferase that mediates the O-methylation of 1-hydroxy carotenoids. Converts hydroxyneurosporene to methoxyneurosporene or demethylspheroidene to spheroidene. Also able to produce spirilloxanthin. This chain is Demethylspheroidene O-methyltransferase (crtF), found in Cereibacter sphaeroides (strain ATCC 17023 / DSM 158 / JCM 6121 / CCUG 31486 / LMG 2827 / NBRC 12203 / NCIMB 8253 / ATH 2.4.1.) (Rhodobacter sphaeroides).